The primary structure comprises 720 residues: Polyribonucleotide nucleotidyltransferase (720 aa).

Residues Asp-485 and Asp-491 each contribute to the Mg(2+) site. One can recognise a KH domain in the interval 552–615 (PRIHTIKINP…EAIRRIQALT (64 aa)). The region spanning 621–689 (GRIYEGKVTR…RQGRIRLSIK (69 aa)) is the S1 motif domain. The tract at residues 697 to 720 (PAAESVAESAPAQEAVVEQVPMTE) is disordered. Residues 698–720 (AAESVAESAPAQEAVVEQVPMTE) show a composition bias toward low complexity.

The protein belongs to the polyribonucleotide nucleotidyltransferase family. Component of the RNA degradosome, which is a multiprotein complex involved in RNA processing and mRNA degradation. Mg(2+) serves as cofactor.

The protein localises to the cytoplasm. The catalysed reaction is RNA(n+1) + phosphate = RNA(n) + a ribonucleoside 5'-diphosphate. Its function is as follows. Involved in mRNA degradation. Catalyzes the phosphorolysis of single-stranded polyribonucleotides processively in the 3'- to 5'-direction. This Tolumonas auensis (strain DSM 9187 / NBRC 110442 / TA 4) protein is Polyribonucleotide nucleotidyltransferase.